A 233-amino-acid chain; its full sequence is Large ribosomal subunit protein mL67 (233 aa).

The disordered stretch occupies residues 214-233 (RQQAQQSEQQSQSELESQTA). Positions 215-233 (QQAQQSEQQSQSELESQTA) are enriched in low complexity.

This sequence belongs to the mitochondrion-specific ribosomal protein mL67 family.

It localises to the nucleus. Its subcellular location is the mitochondrion. Its function is as follows. Transcription factor involved in regulation of RNA polymerase II-dependent transcription. Also involved in regulation of mitochondrial DNA recombination, maintenance and repair, and generation of homoplasmic cells. The sequence is that of Large ribosomal subunit protein mL67 (MHR1) from Debaryomyces hansenii (strain ATCC 36239 / CBS 767 / BCRC 21394 / JCM 1990 / NBRC 0083 / IGC 2968) (Yeast).